The following is a 417-amino-acid chain: Type IV inositol polyphosphate 5-phosphatase 9 (417 aa).

2 catalytic regions span residues 258-273 and 339-354; these read DRVI…ISLP and KKRA…WYGN.

The protein belongs to the inositol polyphosphate 5-phosphatase family. In terms of tissue distribution, specifically expressed in roots.

It carries out the reaction a 1,2-diacyl-sn-glycero-3-phospho-(1D-myo-inositol-4,5-bisphosphate) + H2O = a 1,2-diacyl-sn-glycero-3-phospho-(1D-myo-inositol 4-phosphate) + phosphate. The catalysed reaction is a 1,2-diacyl-sn-glycero-3-phospho-(1D-myo-inositol-3,4,5-trisphosphate) + H2O = a 1,2-diacyl-sn-glycero-3-phospho-(1D-myo-inositol-3,4-bisphosphate) + phosphate. Its function is as follows. Has phosphatase activity toward PtdIns(4,5)P2 and at a lower extent toward PtdIns(3,4,5)P3 but not toward Ins(1,4,5)P3. Functions in salt stress response by regulating reactive oxygen species (ROS) production, endocytosis, Ca(2+) influx and stress-responsive genes expression. The polypeptide is Type IV inositol polyphosphate 5-phosphatase 9 (Arabidopsis thaliana (Mouse-ear cress)).